A 60-amino-acid polypeptide reads, in one-letter code: Large ribosomal subunit protein bL32 (60 aa).

It belongs to the bacterial ribosomal protein bL32 family.

This Streptococcus pneumoniae serotype 19F (strain G54) protein is Large ribosomal subunit protein bL32.